A 112-amino-acid polypeptide reads, in one-letter code: Large ribosomal subunit protein eL30z (112 aa).

The protein belongs to the eukaryotic ribosomal protein eL30 family.

This is Large ribosomal subunit protein eL30z (RPL30A) from Arabidopsis thaliana (Mouse-ear cress).